A 214-amino-acid chain; its full sequence is MKILVTGFNPFGGEKINPALEAVKLLPSEINGAEVRWVEIPTVFYKSSEVLEAEILRYQPDAVLCIGQAGGRTGLTPERVAINQDDARIPDNEGNQPIDTPIRIDGASAYFSSLPIKAMVQAIKKQGLPAVVSNSAGTFVCNHLMYQALYLVDKKFPNMRAGFMHIPYMMEQVVNKPNTAGMSLCDIVRGIEVAIEAIVDYKDKDLQLVGGETH.

Catalysis depends on residues E78, C141, and H165.

This sequence belongs to the peptidase C15 family. As to quaternary structure, homotetramer.

It is found in the cytoplasm. The enzyme catalyses Release of an N-terminal pyroglutamyl group from a polypeptide, the second amino acid generally not being Pro.. Removes 5-oxoproline from various penultimate amino acid residues except L-proline. This is Pyrrolidone-carboxylate peptidase from Streptococcus pneumoniae serotype 2 (strain D39 / NCTC 7466).